The following is a 340-amino-acid chain: Arginase 1, mitochondrial (340 aa).

The transit peptide at 1-24 (MGGVAAGTRWIHHVRRLSAAKVST) directs the protein to the mitochondrion. The Mn(2+) site is built by H159, D183, H185, and D187. Substrate contacts are provided by residues 185-189 (HPDIY) and 193-195 (EGN). Positions 268 and 270 each coordinate Mn(2+). Residue E311 participates in substrate binding.

Belongs to the arginase family. Requires Mn(2+) as cofactor.

It is found in the mitochondrion. It carries out the reaction L-arginine + H2O = urea + L-ornithine. It functions in the pathway nitrogen metabolism; urea cycle; L-ornithine and urea from L-arginine: step 1/1. Its function is as follows. Catalyzes the hydrolysis of L-arginine to urea and L-ornithine. The latter can be utilized in the urea cycle or as a precursor for the synthesis of both polyamines and proline. This chain is Arginase 1, mitochondrial, found in Oryza sativa subsp. indica (Rice).